The primary structure comprises 310 residues: MILTLTLNPSVDISYPLDQFNLDTVNRVSQTSKTAGGKGLNVTRVLSEFGEDVIASGFLGGALGQYIEEQIETTRIKQAFFKIKGETRNCIAILHEGQQTEILEKGPTIELKESEEFKSHLLKLFKETDVAVMSGSLPKGLNTDYYTDIVRLAKEQGILTILDSSGQSLEEVLISNEKPTVIKPNIDELSQLLNYKVTNDIKELKAAVSQPIFNDIEWIIVSLGSEGAFAKHNQKFYKVNIPNIKVVNPVGSGDSTVAGIASGLIHQQTDEELLKKANAFGMLNAMEQQTGHINTDKFDEIFKQIEVIEV.

Belongs to the carbohydrate kinase PfkB family. LacC subfamily.

The catalysed reaction is D-tagatofuranose 6-phosphate + ATP = D-tagatofuranose 1,6-bisphosphate + ADP + H(+). It functions in the pathway carbohydrate metabolism; D-tagatose 6-phosphate degradation; D-glyceraldehyde 3-phosphate and glycerone phosphate from D-tagatose 6-phosphate: step 1/2. This chain is Tagatose-6-phosphate kinase, found in Staphylococcus epidermidis (strain ATCC 12228 / FDA PCI 1200).